The following is a 64-amino-acid chain: Translation machinery-associated protein 7 homolog (64 aa).

The interval Met-1–Lys-64 is disordered. Positions Glu-21 to Gly-50 form a coiled coil. Residues Met-27 to Lys-44 are compositionally biased toward basic and acidic residues.

Belongs to the TMA7 family.

The protein is Translation machinery-associated protein 7 homolog of Aedes aegypti (Yellowfever mosquito).